A 122-amino-acid polypeptide reads, in one-letter code: Prefoldin subunit 1 (122 aa).

Residue Ala-2 is modified to N-acetylalanine.

This sequence belongs to the prefoldin subunit beta family. As to quaternary structure, heterohexamer of two PFD-alpha type and four PFD-beta type subunits.

Binds specifically to cytosolic chaperonin (c-CPN) and transfers target proteins to it. Binds to nascent polypeptide chain and promotes folding in an environment in which there are many competing pathways for nonnative proteins. This is Prefoldin subunit 1 (PFDN1) from Bos taurus (Bovine).